Reading from the N-terminus, the 360-residue chain is Nicotinate-nucleotide--dimethylbenzimidazole phosphoribosyltransferase (360 aa).

The active-site Proton acceptor is glutamate 327.

This sequence belongs to the CobT family.

The enzyme catalyses 5,6-dimethylbenzimidazole + nicotinate beta-D-ribonucleotide = alpha-ribazole 5'-phosphate + nicotinate + H(+). Its pathway is nucleoside biosynthesis; alpha-ribazole biosynthesis; alpha-ribazole from 5,6-dimethylbenzimidazole: step 1/2. Functionally, catalyzes the synthesis of alpha-ribazole-5'-phosphate from nicotinate mononucleotide (NAMN) and 5,6-dimethylbenzimidazole (DMB). In Shewanella baltica (strain OS223), this protein is Nicotinate-nucleotide--dimethylbenzimidazole phosphoribosyltransferase.